We begin with the raw amino-acid sequence, 459 residues long: tRNA modification GTPase MnmE (459 aa).

The (6S)-5-formyl-5,6,7,8-tetrahydrofolate site is built by Arg-23, Glu-85, and Arg-124. Positions 221 to 380 (GLSTAIIGRP…LEKAIADTFF (160 aa)) constitute a TrmE-type G domain. Asn-231 contributes to the K(+) binding site. Residues 231–236 (NVGKSS), 250–256 (TEIPGTT), and 275–278 (DTAG) each bind GTP. Ser-235 is a Mg(2+) binding site. The K(+) site is built by Thr-250, Ile-252, and Thr-255. Thr-256 is a binding site for Mg(2+). Lys-459 contacts (6S)-5-formyl-5,6,7,8-tetrahydrofolate.

Belongs to the TRAFAC class TrmE-Era-EngA-EngB-Septin-like GTPase superfamily. TrmE GTPase family. In terms of assembly, homodimer. Heterotetramer of two MnmE and two MnmG subunits. It depends on K(+) as a cofactor.

The protein localises to the cytoplasm. Its function is as follows. Exhibits a very high intrinsic GTPase hydrolysis rate. Involved in the addition of a carboxymethylaminomethyl (cmnm) group at the wobble position (U34) of certain tRNAs, forming tRNA-cmnm(5)s(2)U34. The protein is tRNA modification GTPase MnmE of Oceanobacillus iheyensis (strain DSM 14371 / CIP 107618 / JCM 11309 / KCTC 3954 / HTE831).